The chain runs to 169 residues: MKDAITSLIATYDVTGKYFDDNAVDTLNAYFSTASARIESVKIINANVSTIIKTAASALFDEQPELIAPGGNANTTRRYAACLRDIDYYLRYATYAIISADVDVLDERVLDGLKETYNSLGVSIAPTVRAIELLKNTSKELIKAAGISAVDFIDEPFDYMGKVLADSSL.

Asn-72 is modified (N4-methylasparagine). Cys-82 contacts (2R,3E)-phycocyanobilin.

This sequence belongs to the phycobiliprotein family. As to quaternary structure, heterodimer of an alpha and a beta chain. In terms of processing, contains one covalently linked phycocyanobilin chromophore.

It is found in the plastid. It localises to the cyanelle thylakoid membrane. Light-harvesting photosynthetic bile pigment-protein from the phycobiliprotein complex. Allophycocyanin has a maximum absorption at approximately 650 nanometers. This chain is Allophycocyanin subunit beta-18 (apcF), found in Cyanophora paradoxa.